The sequence spans 522 residues: MVKHRNSSRSIISYSSSIARFFSRKAISLYLIFVFAFTIWVLVFSSRNIQTDDDHTKHQQQHHRDLIDSESFPPPYLPPRKNLQKPYENTQLWTPPFSFGLHPCVKPTPKYKEFSESDHYITVKSNGGLNQMRTGIADIVAVAHIMNATLVIPELDKRSFWQDSSVFSDIFDEEQFIKSLRRDVKVIKKLPKEVESLPRARKHFTSWSSVGYYEEMTHLWKEYKVIHVAKSDSRLANNDLPIDVQRLRCRVLYRGLCFSPAIESLGQKLVERLKSRAGRYIALHLRYEKDMLAFTGCTYGLTDAESEELRVMRESTSHWKIKSINSTEQREEGLCPLTPKEVGIFLKGLGYSQSTVIYIAAGEIYGGDDRLSELKSRFPNLVFKETLAGNEELKGFTGHATKTAALDYIISVESDVFVPSHSGNMARAVEGHRRFLGHRRTITPDRKGLVKLFVKMERGQLKEGPKLSNFVNQMHKDRQGAPRRRKGPTQGIKGRARFRTEEAFYENPYPECICSSKEHKEP.

The helical; Signal-anchor for type II membrane protein transmembrane segment at 26–46 threads the bilayer; the sequence is AISLYLIFVFAFTIWVLVFSS. Over residues 54 to 67 the composition is skewed to basic and acidic residues; sequence DHTKHQQQHHRDLI. The interval 54-73 is disordered; sequence DHTKHQQQHHRDLIDSESFP. Residue Asn-147 is glycosylated (N-linked (GlcNAc...) asparagine). 284–286 serves as a coordination point for substrate; that stretch reads HLR. Residue Asn-325 is glycosylated (N-linked (GlcNAc...) asparagine). The interval 475-496 is disordered; that stretch reads HKDRQGAPRRRKGPTQGIKGRA.

It belongs to the glycosyltransferase GT106 family.

The protein resides in the membrane. It functions in the pathway glycan metabolism. The chain is O-fucosyltransferase 38 from Arabidopsis thaliana (Mouse-ear cress).